Consider the following 191-residue polypeptide: Small ribosomal subunit protein eS7 (191 aa).

M1 carries the post-translational modification N-acetylmethionine.

This sequence belongs to the eukaryotic ribosomal protein eS7 family.

This Brassica oleracea (Wild cabbage) protein is Small ribosomal subunit protein eS7 (RPS7).